A 318-amino-acid polypeptide reads, in one-letter code: Tumor necrosis factor ligand superfamily member 11 (318 aa).

Residues 1 to 47 (MRRANRDYGKYLRGSEEMGSCPGVPHEGPLHPAPSAPAPAPPPAASR) lie on the Cytoplasmic side of the membrane. A disordered region spans residues 13-41 (RGSEEMGSCPGVPHEGPLHPAPSAPAPAP). Over residues 31–41 (HPAPSAPAPAP) the composition is skewed to pro residues. Residues 48–68 (FMFLALLGLGLGQVVCSIALF) form a helical; Signal-anchor for type II membrane protein membrane-spanning segment. Over 69–318 (LYFRAQMDPN…FGAFKVQDID (250 aa)) the chain is Extracellular. Residues 165-314 (PFAHLTINAA…DATYFGAFKV (150 aa)) enclose the THD domain. Residues asparagine 199 and asparagine 264 are each glycosylated (N-linked (GlcNAc...) asparagine).

The protein belongs to the tumor necrosis factor family. Homotrimer. Interacts with TNFRSF11A and TNFRSF11B. Interacts with FBN1 (via N-terminal domain) in a Ca(+2)-dependent manner. Interacts with TNFAIP6 (via both Link and CUB domains). The soluble form derives from the membrane form by proteolytic processing. Highly expressed in thymus and bone tissues.

The protein localises to the cell membrane. Its subcellular location is the secreted. Cytokine that binds to TNFRSF11B/OPG and to TNFRSF11A/RANK. Osteoclast differentiation and activation factor. Augments the ability of dendritic cells to stimulate naive T-cell proliferation. May be an important regulator of interactions between T-cells and dendritic cells and may play a role in the regulation of the T-cell-dependent immune response. May also play an important role in enhanced bone-resorption in humoral hypercalcemia of malignancy. Induces osteoclastogenesis by activating multiple signaling pathways in osteoclast precursor cells, chief among which is induction of long lasting oscillations in the intracellular concentration of Ca (2+) resulting in the activation of NFATC1, which translocates to the nucleus and induces osteoclast-specific gene transcription to allow differentiation of osteoclasts. During osteoclast differentiation, in a TMEM64 and ATP2A2-dependent manner induces activation of CREB1 and mitochondrial ROS generation necessary for proper osteoclast generation. The protein is Tumor necrosis factor ligand superfamily member 11 (Tnfsf11) of Rattus norvegicus (Rat).